The chain runs to 311 residues: Deacetoxycephalosporin C synthase (311 aa).

One can recognise a Fe2OG dioxygenase domain in the interval 154–267 (DCEPLLRFRY…RTSSVFFLRP (114 aa)).

Belongs to the iron/ascorbate-dependent oxidoreductase family. Requires Fe cation as cofactor. The cofactor is L-ascorbate.

It catalyses the reaction penicillin N + 2-oxoglutarate + O2 = deacetoxycephalosporin C + succinate + CO2 + H2O. It functions in the pathway antibiotic biosynthesis; cephalosporin C biosynthesis. Functionally, catalyzes the step from penicillin N to deacetoxy-cephalosporin C. This chain is Deacetoxycephalosporin C synthase (cefE), found in Streptomyces clavuligerus.